The chain runs to 124 residues: Holo-[acyl-carrier-protein] synthase (124 aa).

2 residues coordinate Mg(2+): Asp-7 and Glu-55.

It belongs to the P-Pant transferase superfamily. AcpS family. Requires Mg(2+) as cofactor.

It localises to the cytoplasm. The catalysed reaction is apo-[ACP] + CoA = holo-[ACP] + adenosine 3',5'-bisphosphate + H(+). Its function is as follows. Transfers the 4'-phosphopantetheine moiety from coenzyme A to a Ser of acyl-carrier-protein. In Borreliella afzelii (strain PKo) (Borrelia afzelii), this protein is Holo-[acyl-carrier-protein] synthase.